The chain runs to 181 residues: Dual-action ribosomal maturation protein DarP (181 aa).

It belongs to the DarP family.

The protein resides in the cytoplasm. Member of a network of 50S ribosomal subunit biogenesis factors which assembles along the 30S-50S interface, preventing incorrect 23S rRNA structures from forming. Promotes peptidyl transferase center (PTC) maturation. This Actinobacillus succinogenes (strain ATCC 55618 / DSM 22257 / CCUG 43843 / 130Z) protein is Dual-action ribosomal maturation protein DarP.